Here is a 259-residue protein sequence, read N- to C-terminus: Ribosomal RNA small subunit methyltransferase A (259 aa).

6 residues coordinate S-adenosyl-L-methionine: Asn-13, Leu-15, Gly-40, Glu-61, Asp-85, and Asn-103.

This sequence belongs to the class I-like SAM-binding methyltransferase superfamily. rRNA adenine N(6)-methyltransferase family. RsmA subfamily.

It is found in the cytoplasm. The enzyme catalyses adenosine(1518)/adenosine(1519) in 16S rRNA + 4 S-adenosyl-L-methionine = N(6)-dimethyladenosine(1518)/N(6)-dimethyladenosine(1519) in 16S rRNA + 4 S-adenosyl-L-homocysteine + 4 H(+). In terms of biological role, specifically dimethylates two adjacent adenosines (A1518 and A1519) in the loop of a conserved hairpin near the 3'-end of 16S rRNA in the 30S particle. May play a critical role in biogenesis of 30S subunits. This is Ribosomal RNA small subunit methyltransferase A from Neisseria gonorrhoeae (strain ATCC 700825 / FA 1090).